Here is a 358-residue protein sequence, read N- to C-terminus: Histidinol-phosphate aminotransferase (358 aa).

Lys-210 is subject to N6-(pyridoxal phosphate)lysine.

The protein belongs to the class-II pyridoxal-phosphate-dependent aminotransferase family. Histidinol-phosphate aminotransferase subfamily. As to quaternary structure, homodimer. Pyridoxal 5'-phosphate serves as cofactor.

It carries out the reaction L-histidinol phosphate + 2-oxoglutarate = 3-(imidazol-4-yl)-2-oxopropyl phosphate + L-glutamate. Its pathway is amino-acid biosynthesis; L-histidine biosynthesis; L-histidine from 5-phospho-alpha-D-ribose 1-diphosphate: step 7/9. The sequence is that of Histidinol-phosphate aminotransferase from Clostridium beijerinckii (strain ATCC 51743 / NCIMB 8052) (Clostridium acetobutylicum).